A 246-amino-acid chain; its full sequence is tRNA (guanine-N(1)-)-methyltransferase (246 aa).

Residues Gly-114 and 133 to 138 contribute to the S-adenosyl-L-methionine site; that span reads LGDYVL.

Belongs to the RNA methyltransferase TrmD family. As to quaternary structure, homodimer.

The protein resides in the cytoplasm. The enzyme catalyses guanosine(37) in tRNA + S-adenosyl-L-methionine = N(1)-methylguanosine(37) in tRNA + S-adenosyl-L-homocysteine + H(+). Specifically methylates guanosine-37 in various tRNAs. This Enterococcus faecalis (strain ATCC 700802 / V583) protein is tRNA (guanine-N(1)-)-methyltransferase.